The sequence spans 1005 residues: MNCTVGNNIYHTYINYFVNNIYNSLSRNINSKINKYYNYYKKSKIFKNIKFYFNLLTFESNYCCDSGQNKYLYDGYNSYYFINIPLQIKFNNLKSRFINYNIINIPKINQSGDIILNGYLRLPILYLQLATNNISYIFNEKITRTYFIKIKNNIYLYIYLYDDFITVYINSYKIKNDLFSMYNNVSFKNKYINFSKIDNVIYVMNLKNNNIKYHIFDKTININNFVNNTMFMDILSIVNKFLNLNLKKKFIQSSNNLINKSTNSVLKTIFRQFTKSVTIFDIEKYCDKLLYKKKIFRSFNIVLFKEHLLVNPVIHYTDQLNVLSYLTNKFKINIFGYSNSSNDKFKVSTNLRKIQSDYIGFINIVNTPDGDTCGLISKLANNTILDKFKLKLINCNNEYFENFTKIDITSKNLYNMTSNNFINIKKNSTFKVKQIEVFKNNEFKLINFDKNKTNKNLNVFNTLSITELIIPFLFNNDPCRGLMGSKMHTQALPLIYNEHPYVMTKYNHMNGLLFNKCITSLCEGIIVSVNNYKIIVMDDKNRYLHYYLYPFNVLDYNSFVSYKPIVWVGEKINIGKILALPSDLKHSEFTLGVNNLLNYSFYNGYEHEDAIVINKNLIIEDILTSISFDVYEEYLSINKLDYVELTLRHLLEYNRYNRYLINEVGVSSNQDYMLFGDILSTKIRYELSLSKNKKFFKVFKLIFKENKKLIVYTKPLTIKRGGEGRLIKYEILGYSKFRQLDAMYPEINVSYLTLRFFIFKIDRINIGDKLCGRHGNKGVVSKIVDNIDLPYTFRGLCPYSITSPIGALARINLGQFLEGSCGYFGLNFNCRIKAPINLYNYHLYSNMYLKNIFNSLNVYNNSYINFSIEKYLRDFKTGYQLKNFNLMLMPYFLKLMHTSKSKFQYRTVGKYSSLTQQPVKGKRVNGSQKFGEMEVWALESHGSAYTIRELGYIKTNVKYFKKFEHKGYKGSETFKVLTLELKNVLININRVDNYSYFNQKIKYNY.

The protein belongs to the RNA polymerase beta chain family. As to quaternary structure, in plastids the minimal PEP RNA polymerase catalytic core is composed of four subunits: alpha, beta, beta', and beta''. When a (nuclear-encoded) sigma factor is associated with the core the holoenzyme is formed, which can initiate transcription (Potential).

Its subcellular location is the plastid. The protein localises to the apicoplast. The enzyme catalyses RNA(n) + a ribonucleoside 5'-triphosphate = RNA(n+1) + diphosphate. DNA-dependent RNA polymerase catalyzes the transcription of DNA into RNA using the four ribonucleoside triphosphates as substrates. The protein is DNA-directed RNA polymerase subunit beta (rpoB) of Theileria parva (East coast fever infection agent).